Reading from the N-terminus, the 127-residue chain is EF-hand calcium-binding domain-containing protein 10 (127 aa).

Residues 63–98 enclose the EF-hand domain; sequence MDNSNIVAMFEMMDSSGRGTISFVQYKEALKTLGLC.

The sequence is that of EF-hand calcium-binding domain-containing protein 10 (EFCAB10) from Homo sapiens (Human).